A 446-amino-acid chain; its full sequence is F-box/LRR-repeat protein At4g29420 (446 aa).

The 51-residue stretch at 1-51 (MDELPPELWIKILSRINDSESLARCRVASKTLNSLSREVRAVNLICTWSRY) folds into the F-box domain. LRR repeat units follow at residues 59-84 (VVTPFKTIFRSLIENSSKIRSISVGV), 103-130 (DLYLTDVEFVKEWLPRVREDLENLSISD), 135-160 (SCWRKSDILALISSNCSKLVKLEVKN), 181-206 (FIRLDDENLEKVNDCFPFLQELNLIG), 223-248 (CHWTVSNAPLSLAIVAPNLLELKLKC), 265-289 (HLSVEDAEGVSFGEFQDLKTLELVS), 318-343 (QSERLELGLATILKAFPGITSLSLSP), and 382-407 (NVHQTVSFIRSIVNKYRGLTDMRLMI).

The chain is F-box/LRR-repeat protein At4g29420 from Arabidopsis thaliana (Mouse-ear cress).